Consider the following 926-residue polypeptide: Mating-type protein A-alpha Y3 (926 aa).

The homeobox DNA-binding region spans 147–206; that stretch reads YKKPRPKFHSEYTPLLELYFHFNAYPTFADRRMLAEKTGMQTRQITVWFQNHRRRAKGPL. Disordered stretches follow at residues 238-281, 308-374, 424-452, and 625-734; these read SHLR…KVGK, QQAP…TSSA, GKGKPSQNLTSTPATFSTVPPRRTSSRLN, and RARK…MNES. Basic and acidic residues-rich tracts occupy residues 267-281 and 326-338; these read KKPDGDKEALRKVGK and NAQDVEMRDATKS. Polar residues predominate over residues 428 to 441; the sequence is PSQNLTSTPATFST. The span at 632–660 shows a compositional bias: basic and acidic residues; sequence KQAEKEARKEEKRARKEAKQAKKDRKEQR. Low complexity-rich tracts occupy residues 669-687 and 699-724; these read STLDSSRASSVTSDASATS and SSASSVASARTPSLSSTSSRRSSGTS.

It localises to the nucleus. In terms of biological role, specifies A-alpha-3 mating-type. May regulate the expression of genes specific to the homokaryotic cell type. The sequence is that of Mating-type protein A-alpha Y3 from Schizophyllum commune (Split gill fungus).